Here is a 448-residue protein sequence, read N- to C-terminus: Ribosomal protein uS12 methylthiotransferase RimO (448 aa).

In terms of domain architecture, MTTase N-terminal spans 13–128 (KSFFITTLGC…AGEILRKNFP (116 aa)). The [4Fe-4S] cluster site is built by C22, C58, C91, C167, C171, and C174. Residues 153–382 (NYSKPYSYVK…AYLGTLKTIH (230 aa)) form the Radical SAM core domain. A TRAM domain is found at 383-448 (QNRIGKIYPC…ELDMSGTWVD (66 aa)).

This sequence belongs to the methylthiotransferase family. RimO subfamily. Requires [4Fe-4S] cluster as cofactor.

The protein resides in the cytoplasm. The enzyme catalyses L-aspartate(89)-[ribosomal protein uS12]-hydrogen + (sulfur carrier)-SH + AH2 + 2 S-adenosyl-L-methionine = 3-methylsulfanyl-L-aspartate(89)-[ribosomal protein uS12]-hydrogen + (sulfur carrier)-H + 5'-deoxyadenosine + L-methionine + A + S-adenosyl-L-homocysteine + 2 H(+). Its function is as follows. Catalyzes the methylthiolation of an aspartic acid residue of ribosomal protein uS12. The polypeptide is Ribosomal protein uS12 methylthiotransferase RimO (Leptospira biflexa serovar Patoc (strain Patoc 1 / Ames)).